The following is a 357-amino-acid chain: Heat-inducible transcription repressor HrcA (357 aa).

It belongs to the HrcA family.

Its function is as follows. Negative regulator of class I heat shock genes (grpE-dnaK-dnaJ and groELS operons). Prevents heat-shock induction of these operons. This is Heat-inducible transcription repressor HrcA from Chlorobium luteolum (strain DSM 273 / BCRC 81028 / 2530) (Pelodictyon luteolum).